Here is a 630-residue protein sequence, read N- to C-terminus: Tyrosinase (630 aa).

Residues H69, H92, H101, H317, H321, and H360 each contribute to the Cu cation site. Residues 90 to 92 constitute a cross-link (2'-(S-cysteinyl)-histidine (Cys-His)); the sequence is CVH.

The protein belongs to the tyrosinase family. Requires Cu(2+) as cofactor.

It carries out the reaction 2 L-dopa + O2 = 2 L-dopaquinone + 2 H2O. The catalysed reaction is L-tyrosine + O2 = L-dopaquinone + H2O. Functionally, this is a copper-containing oxidase that functions in the formation of pigments such as melanins and other polyphenolic compounds. In Aspergillus fumigatus (strain ATCC MYA-4609 / CBS 101355 / FGSC A1100 / Af293) (Neosartorya fumigata), this protein is Tyrosinase (tyr1).